A 344-amino-acid chain; its full sequence is Phosphoribosylformylglycinamidine cyclo-ligase (344 aa).

This sequence belongs to the AIR synthase family.

It is found in the cytoplasm. It carries out the reaction 2-formamido-N(1)-(5-O-phospho-beta-D-ribosyl)acetamidine + ATP = 5-amino-1-(5-phospho-beta-D-ribosyl)imidazole + ADP + phosphate + H(+). It participates in purine metabolism; IMP biosynthesis via de novo pathway; 5-amino-1-(5-phospho-D-ribosyl)imidazole from N(2)-formyl-N(1)-(5-phospho-D-ribosyl)glycinamide: step 2/2. The polypeptide is Phosphoribosylformylglycinamidine cyclo-ligase (Anaeromyxobacter sp. (strain Fw109-5)).